Here is a 357-residue protein sequence, read N- to C-terminus: Protein-arginine kinase (357 aa).

A Phosphagen kinase C-terminal domain is found at isoleucine 24–alanine 255. ATP-binding positions include serine 27–arginine 31, histidine 92, arginine 126, arginine 177–methionine 181, and arginine 208–glutamate 213. An RDXXRA motif of the pArg binding pocket involved in allosteric regulation motif is present at residues arginine 338–alanine 343.

Belongs to the ATP:guanido phosphotransferase family.

It catalyses the reaction L-arginyl-[protein] + ATP = N(omega)-phospho-L-arginyl-[protein] + ADP + H(+). Appears to be allosterically activated by the binding of pArg-containing polypeptides to the pArg-binding pocket localized in the C-terminal domain of McsB. In terms of biological role, catalyzes the specific phosphorylation of arginine residues in proteins. The chain is Protein-arginine kinase from Brevibacillus brevis (strain 47 / JCM 6285 / NBRC 100599).